Here is a 156-residue protein sequence, read N- to C-terminus: Protein Smg homolog (156 aa).

Belongs to the Smg family.

This is Protein Smg homolog from Halorhodospira halophila (strain DSM 244 / SL1) (Ectothiorhodospira halophila (strain DSM 244 / SL1)).